The primary structure comprises 653 residues: Pentatricopeptide repeat-containing protein At3g14730 (653 aa).

PPR repeat units lie at residues 59–93, 95–119, 125–159, 160–193, 194–224, 226–260, 261–295, 296–326, 327–361, 362–396, 401–431, 432–466, 467–497, and 503–537; these read NVATCIATLQRCAQRKDYVSGQQIHGFMVRKGFLD, SPRAGTSLVNMYAKCGLMRRAVLVF, DVFGYNALISGFVVNGSPLDAMETYREMRANGILP, DKYTFPSLLKGSDAMELSDVKKVHGLAFKLGFDS, DCYVGSGLVTSYSKFMSVEDAQKVFDELPDR, DSVLWNALVNGYSQIFRFEDALLVFSKMREEGVGV, SRHTITSVLSAFTVSGDIDNGRSIHGLAVKTGSGS, DIVVSNALIDMYGKSKWLEEANSIFEAMDER, DLFTWNSVLCVHDYCGDHDGTLALFERMLCSGIRP, DIVTLTTVLPTCGRLASLRQGREIHGYMIVSGLLN, NEFIHNSLMDMYVKCGDLRDARMVFDSMRVK, DSASWNIMINGYGVQSCGELALDMFSCMCRAGVKP, DEITFVGLLQACSHSGFLNEGRNFLAQMETV, and TSDHYACVIDMLGRADKLEEAYELAISKPICDNPV. The interval 538–613 is type E motif; it reads VWRSILSSCR…TPGCSWIVLK (76 aa). The segment at 614–644 is type E(+) motif; the sequence is NGVHTFFTGNQTHPEFKSIHDWLSLVISHMH.

This sequence belongs to the PPR family. PCMP-E subfamily.

The polypeptide is Pentatricopeptide repeat-containing protein At3g14730 (PCMP-E31) (Arabidopsis thaliana (Mouse-ear cress)).